The sequence spans 420 residues: Phosphoribosylamine--glycine ligase (420 aa).

One can recognise an ATP-grasp domain in the interval 108–314 (KEIMVKYGVS…FAQNITDILD (207 aa)). 134 to 195 (IEKHGAPIVV…EEFLEGEEFS (62 aa)) contributes to the ATP binding site. E284 and N286 together coordinate Mg(2+).

It belongs to the GARS family. It depends on Mg(2+) as a cofactor. Mn(2+) is required as a cofactor.

The catalysed reaction is 5-phospho-beta-D-ribosylamine + glycine + ATP = N(1)-(5-phospho-beta-D-ribosyl)glycinamide + ADP + phosphate + H(+). Its pathway is purine metabolism; IMP biosynthesis via de novo pathway; N(1)-(5-phospho-D-ribosyl)glycinamide from 5-phospho-alpha-D-ribose 1-diphosphate: step 2/2. The chain is Phosphoribosylamine--glycine ligase from Streptococcus pneumoniae (strain ATCC BAA-255 / R6).